The primary structure comprises 262 residues: DNA repair protein RecO (262 aa).

Belongs to the RecO family.

In terms of biological role, involved in DNA repair and RecF pathway recombination. In Acidovorax ebreus (strain TPSY) (Diaphorobacter sp. (strain TPSY)), this protein is DNA repair protein RecO.